A 345-amino-acid polypeptide reads, in one-letter code: Beta-2-glycoprotein 1 (345 aa).

The signal sequence occupies residues 1–19 (MISPVLILFSSFLCHVAIA). 4 consecutive Sushi domains span residues 21–81 (RTCP…KCTP), 82–139 (RVCP…VCAP), 140–202 (IICP…ECRE), and 203–262 (VKCP…SCKA). 11 disulfide bridges follow: C23-C66, C51-C79, C84-C124, C110-C137, C142-C188, C174-C200, C205-C248, C234-C260, C264-C315, C300-C325, and C307-C345. A glycan (O-linked (GalNAc...) threonine) is linked at T33. O-linked (GalNAc...) threonine glycosylation is present at T149. Residue N162 is glycosylated (N-linked (GlcNAc...) (complex) asparagine). N-linked (GlcNAc...) asparagine glycans are attached at residues N183 and N193. An N-linked (GlcNAc...) asparagine glycan is attached at N253. A sushi-like region spans residues 263–345 (SCKVPVKKAT…KTDASDVKPC (83 aa)).

Post-translationally, N- and O-glycosylated. PubMed:6587378 also reports glycosylation on 'Asn-188' for their allele. Expressed by the liver and secreted in plasma.

It is found in the secreted. Its function is as follows. Binds to various kinds of negatively charged substances such as heparin, phospholipids, and dextran sulfate. May prevent activation of the intrinsic blood coagulation cascade by binding to phospholipids on the surface of damaged cells. This Homo sapiens (Human) protein is Beta-2-glycoprotein 1 (APOH).